Reading from the N-terminus, the 304-residue chain is UDP-N-acetylenolpyruvoylglucosamine reductase (304 aa).

Residues 33–198 (KVGGPVDILL…LEVTFNLEKG (166 aa)) enclose the FAD-binding PCMH-type domain. R177 is a catalytic residue. S227 serves as the catalytic Proton donor. E297 is an active-site residue.

Belongs to the MurB family. FAD serves as cofactor.

The protein resides in the cytoplasm. It catalyses the reaction UDP-N-acetyl-alpha-D-muramate + NADP(+) = UDP-N-acetyl-3-O-(1-carboxyvinyl)-alpha-D-glucosamine + NADPH + H(+). It participates in cell wall biogenesis; peptidoglycan biosynthesis. In terms of biological role, cell wall formation. The protein is UDP-N-acetylenolpyruvoylglucosamine reductase of Clostridium kluyveri (strain NBRC 12016).